A 635-amino-acid polypeptide reads, in one-letter code: Sulfite reductase [ferredoxin], chloroplastic (635 aa).

Residues 1–50 constitute a chloroplast transit peptide; the sequence is MSGAIGGAEVHGFRGAAAQLPRSRVLGRPIRVAPPAAARPGGASAGSIRA. Disordered regions lie at residues 31 to 50 and 245 to 267; these read RVAP…SIRA and PEVT…PEPI. Over residues 245–254 the composition is skewed to basic and acidic residues; that stretch reads PEVTKARNDN. Positions 494, 500, 540, and 544 each coordinate [4Fe-4S] cluster. C544 contributes to the siroheme binding site.

The protein belongs to the nitrite and sulfite reductase 4Fe-4S domain family. As to quaternary structure, monomer. Interacts with ferredoxin. It depends on siroheme as a cofactor. The cofactor is [4Fe-4S] cluster. Phosphorylated; this phosphorylation reduces DNA-binding. Present in roots and leaves (at protein level). In leaves, sulfite reductase activity is detected in both bundle sheath and mesophyll cell types.

It localises to the plastid. Its subcellular location is the chloroplast stroma. The protein localises to the chloroplast nucleoid. It is found in the plastid stroma. The catalysed reaction is hydrogen sulfide + 6 oxidized [2Fe-2S]-[ferredoxin] + 3 H2O = sulfite + 6 reduced [2Fe-2S]-[ferredoxin] + 7 H(+). Its activity is regulated as follows. Inhibited by the tryptophan-modifying reagent, N-bromosuccinimide (NBS), by the lysine-modifying reagent, N-acetylsuccinimide and by the arginine-modifying reagent, phenylglyoxal. Complex formation with ferredoxin prevents these inhibitions. Functionally, essential protein with sulfite reductase activity required in assimilatory sulfate reduction pathway during both primary and secondary metabolism and thus involved in development and growth. Its function is as follows. DNA-binding protein that binds to both double-stranded and single-stranded DNA without significant sequence specificity to reversibly repress the transcriptional activity of chloroplast nucleoids by promoting DNA compaction and possibly regulate DNA replication. The chain is Sulfite reductase [ferredoxin], chloroplastic (SIR) from Zea mays (Maize).